A 352-amino-acid chain; its full sequence is MAATKRKRRGDLEVQAKKPKKNRKDAGQPAKQADVAKEAEEEKDRIPGPVCKGKWKNKERILIFSSRGINFRTRHLMQDLRMLMPHSKADTKMDRKDKLFVINEVCEMKNCNKCIYFEAKKKQDLYMWLSNSPHGPSAKFLVQNIHTLAELKMTGNCLKGSRPLLSFDPAFDDLPHYALLKEFLIQIFSTPRYHPKSQPFVDHVFTFTILDNRIWFRNFQIIEEDAALVEIGPRFVLNLIKIFQGSFGGPTLYENPHYQSPNMHRRVVRSITAAKYREKQQVKDVQKSRKKEPKTILPHDPTADVFVTPAEEKPIEVQWVKPEPKVDLKARKRRIYKRHRKLQQKMSRGGAK.

A disordered region spans residues 1 to 47 (MAATKRKRRGDLEVQAKKPKKNRKDAGQPAKQADVAKEAEEEKDRIP). Positions 34–46 (DVAKEAEEEKDRI) are enriched in basic and acidic residues. The region spanning 59–248 (ERILIFSSRG…LIKIFQGSFG (190 aa)) is the Brix domain. Lysine 159 participates in a covalent cross-link: Glycyl lysine isopeptide (Lys-Gly) (interchain with G-Cter in SUMO2). Phosphoserine is present on serine 260. N6-acetyllysine is present on lysine 275. A disordered region spans residues 281 to 301 (QVKDVQKSRKKEPKTILPHDP). Residues lysine 313 and lysine 321 each participate in a glycyl lysine isopeptide (Lys-Gly) (interchain with G-Cter in SUMO2) cross-link.

Belongs to the BRX1 family.

It localises to the nucleus. The protein localises to the nucleolus. Required for biogenesis of the 60S ribosomal subunit. In Rattus norvegicus (Rat), this protein is Ribosome biogenesis protein BRX1 homolog (Brix1).